Here is an 83-residue protein sequence, read N- to C-terminus: Parvalbumin beta 3 (83 aa).

EF-hand domains are found at residues 13–48 (KSNDDVKKAFFVIDQDKSGFIEEDELKLFLQNFSAG) and 52–83 (LTAGETKTFLAAGDSDGDGMIGVDEFQALVKA). 11 residues coordinate Ca(2+): Asp-26, Asp-28, Ser-30, Phe-32, Glu-34, Glu-37, Asp-65, Asp-67, Asp-69, Met-71, and Glu-76.

The protein belongs to the parvalbumin family.

In terms of biological role, in muscle, parvalbumin is thought to be involved in relaxation after contraction. It binds two calcium ions. The protein is Parvalbumin beta 3 of Macruronus novaezelandiae (Blue grenadier).